The following is a 124-amino-acid chain: Late histone H2B.2.1 (124 aa).

The disordered stretch occupies residues 1–32 (MPAKQTSGKGAKKAGKAKGRPAGASKTRRRKR). The span at 10 to 19 (GAKKAGKAKG) shows a compositional bias: basic residues. Ser111 carries an O-linked (GlcNAc) serine glycan. Lys119 participates in a covalent cross-link: Glycyl lysine isopeptide (Lys-Gly) (interchain with G-Cter in ubiquitin).

This sequence belongs to the histone H2B family. The nucleosome is a histone octamer containing two molecules each of H2A, H2B, H3 and H4 assembled in one H3-H4 heterotetramer and two H2A-H2B heterodimers. The octamer wraps approximately 147 bp of DNA. Post-translationally, monoubiquitination of Lys-119 gives a specific tag for epigenetic transcriptional activation and is also prerequisite for histone H3 'Lys-4' and 'Lys-79' methylation. GlcNAcylation at Ser-111 promotes monoubiquitination of Lys-119. It fluctuates in response to extracellular glucose, and associates with transcribed genes.

Its subcellular location is the nucleus. It is found in the chromosome. Functionally, core component of nucleosome. Nucleosomes wrap and compact DNA into chromatin, limiting DNA accessibility to the cellular machineries which require DNA as a template. Histones thereby play a central role in transcription regulation, DNA repair, DNA replication and chromosomal stability. DNA accessibility is regulated via a complex set of post-translational modifications of histones, also called histone code, and nucleosome remodeling. The polypeptide is Late histone H2B.2.1 (Psammechinus miliaris (Green sea urchin)).